Here is a 396-residue protein sequence, read N- to C-terminus: Acetyl-CoA acetyltransferase (396 aa).

The active-site Acyl-thioester intermediate is Cys89. Residues 223 to 225 and Ser249 each bind CoA; that span reads RKS. Active-site proton acceptor residues include His352 and Cys382.

This sequence belongs to the thiolase-like superfamily. Thiolase family.

The protein localises to the cytoplasm. The catalysed reaction is 2 acetyl-CoA = acetoacetyl-CoA + CoA. Its pathway is lipid metabolism; butanoate metabolism. Functionally, involved in syntrophic growth of S.wolfei with butyrate, as part of the butyrate oxidation pathway. Probably catalyzes the beta-keto thiolysis of acetoacetyl-CoA, leading to 2 acetyl-CoA molecules. This chain is Acetyl-CoA acetyltransferase, found in Syntrophomonas wolfei subsp. wolfei (strain DSM 2245B / Goettingen).